Reading from the N-terminus, the 35-residue chain is DDLFNINAGIVKLFGVTTLDVVRTQDGGTEVVEAK.

Asn-7 is a binding site for NAD(+). A substrate-binding site is contributed by Arg-23.

Belongs to the LDH/MDH superfamily. MDH type 1 family. Homodimer.

It localises to the mitochondrion matrix. It carries out the reaction (S)-malate + NAD(+) = oxaloacetate + NADH + H(+). The protein is Malate dehydrogenase, mitochondrial of Capsicum annuum var. annuum (Red pepper).